Consider the following 3926-residue polypeptide: Protein bassoon (3926 aa).

Residues 1 to 161 (MGNEVSLEGG…PTSPYSVPQI (161 aa)) are disordered. G2 is lipidated: N-myristoyl glycine. Pro residues-rich tracts occupy residues 15–30 (PLPPGGAGPGPGPGPG) and 58–72 (PPVPGPGPGPGPGPG). The segment at 23–32 (PGPGPGPGPG) is 5 X 2 AA tandem repeats of P-G. A 7 X 2 AA tandem repeats of P-G region spans residues 61–74 (PGPGPGPGPGPGPG). Polar residues-rich tracts occupy residues 90-105 (RAASPTPKQASATTPG) and 130-157 (QVDSRTQRSGRSPSVSPDRGSTPTSPYS). S145 carries the phosphoserine modification. Residue R148 is modified to Omega-N-methylarginine. 2 consecutive C4-type zinc fingers follow at residues 170-193 (CPICKTSDLTSTPSQPNFNTCTQC) and 198-220 (CNQCGFNPNPHLTQVKEWLCLNC). Disordered stretches follow at residues 231–343 (TTAP…EQTQ) and 366–459 (SVQP…KTMP). A compositionally biased stretch (polar residues) spans 233–243 (APRSKSQQQLH). Phosphoserine is present on residues S244 and S248. Over residues 366 to 377 (SVQPEADTQGQP) the composition is skewed to polar residues. C4-type zinc fingers lie at residues 465–488 (CPLCQAELNVGSKSPANYNTCTTC) and 493–515 (CNLCGFNPTPHLVEKTEWLCLNC). Disordered stretches follow at residues 524-927 (SLGE…LQGG) and 940-1248 (GSYG…AEGT). Positions 552-569 (PLKQKGPQGLGQPSGPLP) are enriched in low complexity. 3 repeat units span residues 571–577 (KASPLST), 578–584 (KASPLPS), and 585–591 (KASPQAK). A 3 X 7 AA tandem repeats of K-A-S-P-[LQ]-[APS]-[KST] region spans residues 571 to 591 (KASPLSTKASPLPSKASPQAK). Pro residues predominate over residues 619–631 (MPKPPPETTPTPA). Polar residues predominate over residues 671-680 (QDASRSPQSL). Positions 681-698 (SDTGYSSDGISSSQSEIT) are enriched in low complexity. The segment covering 771-787 (FDSDEELEDILEEDEDS) has biased composition (acidic residues). Residues 788–797 (AEWRRRREQQ) show a composition bias toward basic and acidic residues. Positions 851 to 862 (SAEEDNLEEDDT) are enriched in acidic residues. R867 carries the post-translational modification Omega-N-methylarginine. S970 carries the post-translational modification Phosphoserine. The span at 984–1001 (PASTPSYTSGTSPTSLSS) shows a compositional bias: low complexity. The stretch at 1037–1092 (IEDSSEEEELREEEELLREQEKMREVEQQRIRSTARKTRRDKEELRAQRRRERSKT) forms a coiled coil. Residues 1039–1052 (DSSEEEELREEEEL) show a composition bias toward acidic residues. Phosphoserine occurs at positions 1040 and 1041. Over residues 1053-1066 (LREQEKMREVEQQR) the composition is skewed to basic and acidic residues. Position 1090 is a phosphoserine (S1090). Residue T1092 is modified to Phosphothreonine. Residues S1098 and S1104 each carry the phosphoserine modification. Basic and acidic residues predominate over residues 1107-1122 (EELRQAAEMEELHRSS). Low complexity-rich tracts occupy residues 1123–1133 (CSEYSPSPSLD) and 1163–1180 (SPTETPSGSSTTPSSGRP). A coiled-coil region spans residues 1181–1208 (LKSAEEAYEEMMRKAELLQRQQGQAAGA). Positions 1182–1197 (KSAEEAYEEMMRKAEL) are enriched in basic and acidic residues. Low complexity predominate over residues 1199 to 1209 (QRQQGQAAGAR). S1226 carries the phosphoserine modification. The stretch at 1276–1294 (RDLAFAEDKKKEKQFLNAE) forms a coiled coil. Disordered regions lie at residues 1298–1547 (MDPM…RLVW) and 1570–1620 (RMVH…RVPS). Residues 1322-1332 (SFSTPTSSDSS) are compositionally biased toward low complexity. T1343 carries an O-linked (GlcNAc) threonine glycan. Positions 1346–1355 (FAKETQDPLK) are enriched in basic and acidic residues. Low complexity-rich tracts occupy residues 1358 to 1367 (SSPASPSSAS) and 1377 to 1392 (GPGTPATTAVAPCPAG). O-linked (GlcNAc) threonine glycosylation is present at T1384. Polar residues predominate over residues 1408–1434 (RSPSPSSTAHSYGHSPTTANYGSQTED). Low complexity predominate over residues 1466-1493 (PSRAYSYFASSSPPLSPSSPSESPTFSP). S1477, S1486, and S1488 each carry phosphoserine. Polar residues predominate over residues 1570–1598 (RMVHASASTSPLCSPTETQPTTHGYSQTT). The segment covering 1606-1616 (PPEPPGPPGFP) has biased composition (pro residues). An omega-N-methylarginine mark is found at R1787 and R1791. At R1801 the chain carries Asymmetric dimethylarginine; alternate. At R1801 the chain carries Omega-N-methylarginine; alternate. R1813 carries the omega-N-methylarginine modification. Residues 1924 to 1978 (PEKSMADAAPPGQSSSPFYGPRDPEPPEPPTYRAQGVVGPGPHEEQRPYPQGLPG) are disordered. 2 positions are modified to phosphoserine: S1985 and S2041. An omega-N-methylarginine mark is found at R2046 and R2076. Asymmetric dimethylarginine occurs at positions 2250, 2260, and 2266. The interval 2287-2309 (AAKAPGAGGPSRPEMPVGAAREE) is disordered. The O-linked (GlcNAc) threonine glycan is linked to T2314. The segment covering 2324–2341 (GAPAPAPLAGQKPPADAA) has biased composition (low complexity). Disordered regions lie at residues 2324–2370 (GAPA…KQQE) and 2532–2568 (PSSASDMSLQTEEQWEASRSGIKKRHSMPRLRDACEL). Residues 2351-2476 (RPGFEKEEAS…EEQKQRQKAP (126 aa)) are a coiled coil. The segment covering 2353 to 2370 (GFEKEEASQEERQRKQQE) has biased composition (basic and acidic residues). Residues 2533–2543 (SSASDMSLQTE) are compositionally biased toward polar residues. S2570 is subject to Phosphoserine. Residues T2587 and T2614 each carry the phosphothreonine modification. Residues 2601–2655 (RRRARRSADCSVQTDDEDSAEWEQPVRRRRSRLPRHSDSGSDSKHDATASSSSAA) form a disordered region. Residues 2635-2647 (RHSDSGSDSKHDA) are compositionally biased toward basic and acidic residues. T2691 carries an O-linked (GlcNAc) threonine glycan. The interaction with DAO stretch occupies residues 2721-3268 (EPDGQAQGVA…PGSSGRPGKE (548 aa)). Phosphoserine is present on residues S2802, S2851, and S2857. The segment at 2845–2865 (TLQRSLSDPKPLSPTAEESAK) is disordered. A glycan (O-linked (GlcNAc) threonine) is linked at T2936. The stretch at 2939–2981 (SLLRELDRDLRLVEHESTKLRKKQAELDEEEKEIDAKLKYLEL) forms a coiled coil. The residue at position 3013 (S3013) is a Phosphoserine. The span at 3039–3055 (AAAPATPSGPTAFQQPR) shows a compositional bias: low complexity. Disordered regions lie at residues 3039–3375 (AAAP…FSPI), 3424–3551 (GMSS…PRAH), and 3572–3897 (EAYH…SVFS). Residues 3083–3095 (YPGPSTYPAPAFP) show a composition bias toward pro residues. The span at 3165 to 3176 (ASPVVPMSSAPS) shows a compositional bias: low complexity. Polar residues predominate over residues 3205–3228 (SVSQSPAPTYPSDSHYTSLEQNVP). At S3291 the chain carries Phosphoserine. 3 stretches are compositionally biased toward basic and acidic residues: residues 3321–3333 (GDSDYRHGARVEK), 3363–3375 (QGMEQKISKFSPI), and 3465–3477 (GYEREREAVERLQ). Residue S3373 is modified to Phosphoserine. At R3492 the chain carries Omega-N-methylarginine. 4 stretches are compositionally biased toward basic and acidic residues: residues 3540 to 3551 (VQEHVKDGPRAH), 3583 to 3593 (WFDKPRDARSD), 3628 to 3647 (LWPHDEGGPGRHASAKEHRH), and 3657 to 3681 (HTGEEPGRRAAKPHARDLGRHEARP). The span at 3703-3712 (AEYSQPSRAS) shows a compositional bias: polar residues. Low complexity predominate over residues 3741–3807 (PQAQPQLQGR…RLQQQSQPTT (67 aa)). Residue R3808 is modified to Omega-N-methylarginine. Composition is skewed to low complexity over residues 3849–3860 (AKAPQQGRAPQA) and 3882–3892 (GAPAGQPGADG).

Interacts with PCLO, ERC2/CAST1, RIMS1 and UNC13A. Interacts with TPRG1L. Interacts with DYNLL1 and DYNLL2; these interactions potentially link PTVs to dynein and myosin V motor complexes. Interacts with ATG5; this interaction is important for the regulation of presynaptic autophagy. Interacts (via C-terminus) with TRIO (via N-terminus). Interacts with CTBP1. Interacts with SIAH1; this interaction negatively regulates SIAH1 E3 ligase activity. Interacts (via coiled region) with DAO; the interaction is direct. Post-translationally, myristoylated. The N-terminal myristoylation is not sufficient for presynaptic localization. Exclusively expressed in brain.

The protein localises to the cytoplasm. Its subcellular location is the presynaptic active zone. It localises to the cytoskeleton. It is found in the cytoplasmic vesicle. The protein resides in the secretory vesicle. The protein localises to the synaptic vesicle membrane. Scaffold protein of the presynaptic cytomatrix at the active zone (CAZ) which is the place in the synapse where neurotransmitter is released. After synthesis, participates in the formation of Golgi-derived membranous organelles termed Piccolo-Bassoon transport vesicles (PTVs) that are transported along axons to sites of nascent synaptic contacts. At the presynaptic active zone, regulates the spatial organization of synaptic vesicle cluster, the protein complexes that execute membrane fusion and compensatory endocytosis. Also functions in processes other than assembly such as the regulation of specific presynaptic protein ubiquitination by interacting with SIAH1 or the regulation of presynaptic autophagy by associating with ATG5. Also mediates synapse to nucleus communication leading to reconfiguration of gene expression by associating with the transcriptional corepressor CTBP1 and by subsequently reducing the size of its pool available for nuclear import. Inhibits the activity of the proportion of DAO enzyme that localizes to the presynaptic active zone, which may modulate synaptic transmission. The polypeptide is Protein bassoon (Homo sapiens (Human)).